The sequence spans 591 residues: V-type ATP synthase alpha chain (591 aa).

An ATP-binding site is contributed by 232 to 239 (GPFGAGKT).

This sequence belongs to the ATPase alpha/beta chains family.

It catalyses the reaction ATP + H2O + 4 H(+)(in) = ADP + phosphate + 5 H(+)(out). Produces ATP from ADP in the presence of a proton gradient across the membrane. The V-type alpha chain is a catalytic subunit. This Clostridium perfringens (strain SM101 / Type A) protein is V-type ATP synthase alpha chain.